The sequence spans 227 residues: Enolase-phosphatase E1 (227 aa).

Mg(2+) contacts are provided by Asp12 and Glu14. Residues 118-119 and Lys159 contribute to the substrate site; that span reads SS. Asp186 is a binding site for Mg(2+).

The protein belongs to the HAD-like hydrolase superfamily. MasA/MtnC family. Monomer. Requires Mg(2+) as cofactor.

The protein resides in the cytoplasm. The protein localises to the nucleus. It carries out the reaction 5-methylsulfanyl-2,3-dioxopentyl phosphate + H2O = 1,2-dihydroxy-5-(methylsulfanyl)pent-1-en-3-one + phosphate. The protein operates within amino-acid biosynthesis; L-methionine biosynthesis via salvage pathway; L-methionine from S-methyl-5-thio-alpha-D-ribose 1-phosphate: step 3/6. Its pathway is amino-acid biosynthesis; L-methionine biosynthesis via salvage pathway; L-methionine from S-methyl-5-thio-alpha-D-ribose 1-phosphate: step 4/6. Functionally, bifunctional enzyme that catalyzes the enolization of 2,3-diketo-5-methylthiopentyl-1-phosphate (DK-MTP-1-P) into the intermediate 2-hydroxy-3-keto-5-methylthiopentenyl-1-phosphate (HK-MTPenyl-1-P), which is then dephosphorylated to form the acireductone 1,2-dihydroxy-3-keto-5-methylthiopentene (DHK-MTPene). This Vanderwaltozyma polyspora (strain ATCC 22028 / DSM 70294 / BCRC 21397 / CBS 2163 / NBRC 10782 / NRRL Y-8283 / UCD 57-17) (Kluyveromyces polysporus) protein is Enolase-phosphatase E1.